A 269-amino-acid chain; its full sequence is Hydroxyethylthiazole kinase (269 aa).

Position 42 (M42) interacts with substrate. The ATP site is built by R118 and S164. G191 serves as a coordination point for substrate.

The protein belongs to the Thz kinase family. Mg(2+) is required as a cofactor.

It catalyses the reaction 5-(2-hydroxyethyl)-4-methylthiazole + ATP = 4-methyl-5-(2-phosphooxyethyl)-thiazole + ADP + H(+). It functions in the pathway cofactor biosynthesis; thiamine diphosphate biosynthesis; 4-methyl-5-(2-phosphoethyl)-thiazole from 5-(2-hydroxyethyl)-4-methylthiazole: step 1/1. In terms of biological role, catalyzes the phosphorylation of the hydroxyl group of 4-methyl-5-beta-hydroxyethylthiazole (THZ). This is Hydroxyethylthiazole kinase from Listeria monocytogenes serotype 4b (strain F2365).